Reading from the N-terminus, the 366-residue chain is 5-hydroxytryptamine receptor 1F (366 aa).

Topologically, residues 1 to 24 (MDFLNSSDQNLTSEELLHRMPSKI) are extracellular. N-linked (GlcNAc...) asparagine glycosylation is found at Asn-5 and Asn-10. The helical transmembrane segment at 25–49 (LVSLTLSGLALMTTTINSLVIAAII) threads the bilayer. Topologically, residues 50–59 (VTRKLHHPAN) are cytoplasmic. The chain crosses the membrane as a helical span at residues 60–81 (YLICSLAVTDFLVAVLVMPFSI). Residues 82–96 (VYIVRESWIMGQVLC) are Extracellular-facing. Residues Cys-96 and Cys-172 are joined by a disulfide bond. Residues 97–119 (DIWLSVDIICCTCSILHLSAIAL) traverse the membrane as a helical segment. Positions 103 and 107 each coordinate serotonin. A DRY motif; important for ligand-induced conformation changes motif is present at residues 120–122 (DRY). At 120-139 (DRYRAITDAVEYARKRTPKQ) the chain is on the cytoplasmic side. The chain crosses the membrane as a helical span at residues 140-159 (AGIMITIVWIISVFISMPPL). The Extracellular portion of the chain corresponds to 160-178 (FWRHQGTSRDDECIIKHDH). A helical membrane pass occupies residues 179-202 (IVSTIYSTFGAFYIPLVLILILYY). The Cytoplasmic portion of the chain corresponds to 203 to 291 (KIYKAAKTLY…KISGTRERKA (89 aa)). A helical transmembrane segment spans residues 292-315 (ATTLGLILGAFVICWLPFFVKELV). The Extracellular portion of the chain corresponds to 316 to 327 (VNVCEKCKISEE). The helical transmembrane segment at 328-350 (MANFLAWLGYLNSLINPLIYTIF) threads the bilayer. Residues 343–347 (NPLIY) carry the NPxxY motif; important for ligand-induced conformation changes and signaling motif. The Cytoplasmic portion of the chain corresponds to 351–366 (NEDFKKAFQKLVRCQY).

The protein belongs to the G-protein coupled receptor 1 family.

Its subcellular location is the cell membrane. G-protein coupled receptor for 5-hydroxytryptamine (serotonin). Also functions as a receptor for various alkaloids and psychoactive substances. Ligand binding causes a conformation change that triggers signaling via guanine nucleotide-binding proteins (G proteins) and modulates the activity of downstream effectors, such as adenylate cyclase. HTR1F is coupled to G(i)/G(o) G alpha proteins and mediates inhibitory neurotransmission by inhibiting adenylate cyclase activity. The chain is 5-hydroxytryptamine receptor 1F (HTR1F) from Cavia porcellus (Guinea pig).